Here is a 166-residue protein sequence, read N- to C-terminus: HTH-type transcriptional regulator PetP (166 aa).

The HTH marR-type domain maps to 17–152 (DEQLRKGIEA…FRQVLEAMMD (136 aa)). The H-T-H motif DNA-binding region spans 66-89 (VTTLISVLGVTKQSLNRVLRTLID).

In terms of biological role, necessary for photosynthetic and respiratory growth. The polypeptide is HTH-type transcriptional regulator PetP (petP) (Rhodobacter capsulatus (strain ATCC BAA-309 / NBRC 16581 / SB1003)).